The following is a 916-amino-acid chain: Dual serine/threonine and tyrosine protein kinase (916 aa).

Basic and acidic residues predominate over residues 1-19; the sequence is MQRDGTRSARRMDEGDRRT. Positions 1–27 are disordered; it reads MQRDGTRSARRMDEGDRRTGSAGRSGS. The region spanning 641–895 is the Protein kinase domain; sequence PRIGRELGRG…PLMGIVQPML (255 aa). ATP is bound by residues 647 to 655 and K670; that span reads LGRGQYGVV. Residue D766 is the Proton acceptor of the active site.

This sequence belongs to the protein kinase superfamily. Ser/Thr protein kinase family.

The protein resides in the cytoplasm. Its subcellular location is the cell membrane. It is found in the apical cell membrane. It localises to the basolateral cell membrane. The protein localises to the cell junction. The catalysed reaction is L-seryl-[protein] + ATP = O-phospho-L-seryl-[protein] + ADP + H(+). The enzyme catalyses L-threonyl-[protein] + ATP = O-phospho-L-threonyl-[protein] + ADP + H(+). It catalyses the reaction L-tyrosyl-[protein] + ATP = O-phospho-L-tyrosyl-[protein] + ADP + H(+). In terms of biological role, may act as a positive regulator of ERK phosphorylation downstream of fibroblast growth factor-receptor activation. May induce both caspase-dependent apoptosis and caspase-independent cell death. May play a role in the embryonic development. This chain is Dual serine/threonine and tyrosine protein kinase (dstyk), found in Xenopus laevis (African clawed frog).